The sequence spans 281 residues: DegV domain-containing protein YqaC (281 aa).

The DegV domain maps to 3-279 (LAVITDSSAD…LNTVAYGISP (277 aa)). Hexadecanoate-binding residues include Thr-60 and Ser-93.

Functionally, may bind long-chain fatty acids, such as palmitate, and may play a role in lipid transport or fatty acid metabolism. This chain is DegV domain-containing protein YqaC (yqaC), found in Lactococcus lactis subsp. lactis (strain IL1403) (Streptococcus lactis).